A 435-amino-acid polypeptide reads, in one-letter code: Temperature-sensitive sn-2 acyl-lipid omega-3 desaturase (ferredoxin), chloroplastic (435 aa).

Residues methionine 1–proline 42 constitute a chloroplast transit peptide. 2 consecutive transmembrane segments (helical) span residues methionine 111–phenylalanine 131 and tryptophan 134–leucine 154. The Histidine box-1 motif lies at histidine 156–histidine 160. The Histidine box-2 signature appears at histidine 192–histidine 196. 2 helical membrane-spanning segments follow: residues valine 268 to glycine 290 and leucine 297 to glycine 319. Residues histidine 359 to histidine 363 carry the Histidine box-3 motif.

It belongs to the fatty acid desaturase type 1 family.

Its subcellular location is the plastid. The protein localises to the chloroplast membrane. It catalyses the reaction a (7Z,10Z)-hexadecadienoyl-containing glycerolipid + 2 reduced [2Fe-2S]-[ferredoxin] + O2 + 2 H(+) = a (7Z,10Z,13Z)-hexadecatrienoyl-containing glycerolipid + 2 oxidized [2Fe-2S]-[ferredoxin] + 2 H2O. It carries out the reaction a (9Z,12Z)-octadecadienoyl-containing glycerolipid + 2 reduced [2Fe-2S]-[ferredoxin] + O2 + 2 H(+) = (9Z,12Z,15Z)-octadecatrienoyl-containing glycerolipid + 2 oxidized [2Fe-2S]-[ferredoxin] + 2 H2O. It functions in the pathway lipid metabolism; polyunsaturated fatty acid biosynthesis. Functionally, chloroplast omega-3 fatty acid desaturase introduces the third double bond in the biosynthesis of 16:3 and 18:3 fatty acids, important constituents of plant membranes. It is thought to use ferredoxin as an electron donor and to act on fatty acids esterified to galactolipids, sulfolipids and phosphatidylglycerol. In Arabidopsis thaliana (Mouse-ear cress), this protein is Temperature-sensitive sn-2 acyl-lipid omega-3 desaturase (ferredoxin), chloroplastic.